Consider the following 362-residue polypeptide: Class I histocompatibility antigen, Gogo-B*0102 alpha chain (362 aa).

The signal sequence occupies residues 1 to 24 (MRVTAPRTLLLLLSAALALTETWA). Positions 25–114 (GSHSMRYFDT…ALRYYNQSEA (90 aa)) are alpha-1. At 25-308 (GSHSMRYFDT…EPSSQSTIPI (284 aa)) the chain is on the extracellular side. N-linked (GlcNAc...) asparagine glycosylation is present at asparagine 110. The segment at 115 to 206 (GSHTFQRMFG…ENGRETLQRA (92 aa)) is alpha-2. Disulfide bonds link cysteine 125-cysteine 188 and cysteine 227-cysteine 283. The interval 207-298 (DTPKTHVTHH…GLPKPLTLRW (92 aa)) is alpha-3. The Ig-like C1-type domain occupies 209 to 295 (PKTHVTHHPI…QHEGLPKPLT (87 aa)). The interval 299 to 308 (EPSSQSTIPI) is connecting peptide. Residues 309–332 (VGIVAGLAVLAVVVIGAVVTAVIC) traverse the membrane as a helical segment. The Cytoplasmic segment spans residues 333–362 (RRKSSGGKGGSYSQAASSDSAQGSDVSLTA). Residues 335–362 (KSSGGKGGSYSQAASSDSAQGSDVSLTA) are disordered. The segment covering 343–362 (SYSQAASSDSAQGSDVSLTA) has biased composition (low complexity).

The protein belongs to the MHC class I family. Heterodimer of an alpha chain and a beta chain (beta-2-microglobulin).

It localises to the membrane. Functionally, involved in the presentation of foreign antigens to the immune system. This is Class I histocompatibility antigen, Gogo-B*0102 alpha chain from Gorilla gorilla gorilla (Western lowland gorilla).